A 67-amino-acid polypeptide reads, in one-letter code: Vespin (67 aa).

The first 21 residues, 1–21 (MHPIIWELSHMVDLQAAAQKL), serve as a signal peptide directing secretion.

In terms of tissue distribution, expressed by the venom gland.

The protein resides in the secreted. Its function is as follows. Shows contractile activity on isolated ileum smooth muscle. This Vespa magnifica (Hornet) protein is Vespin.